A 345-amino-acid chain; its full sequence is MKKVTMLGAGSWGTALALVLTDNGNEVCVWAHRADLIHQINELHENKDYLPNVKLSTSIKGTTDMKEAVSDADVIIVAVPTKAIREVLRQAVPFITKKAVFVHVSKGIEPDSLLRISEIMEIELPSDVRKDIVVLSGPSHAEEVGLRHPTTVTASSKSMRAAEEVQDLFINHNFRVYTNPDIIGVEIGGALKNIIALAAGITDGLGYGDNAKAALITRGLAEIARLGTKMGGNPLTFSGLTGVGDLIVTCTSVHSRNWRAGNLLGKGYKLEDVLEEMGMVVEGVRTTKAAYQLSKKYDVKMPITEALHQVLFNGQKVETAVESLMARGKTHEMEDLVNTFENQVK.

Positions 11, 12, 32, 33, and 106 each coordinate NADPH. Sn-glycerol 3-phosphate is bound by residues Lys-106, Gly-137, and Ser-139. Residue Ala-141 participates in NADPH binding. Sn-glycerol 3-phosphate contacts are provided by Lys-192, Asp-245, Ser-255, Arg-256, and Asn-257. Lys-192 acts as the Proton acceptor in catalysis. Arg-256 contributes to the NADPH binding site. Residues Val-280 and Glu-282 each coordinate NADPH.

This sequence belongs to the NAD-dependent glycerol-3-phosphate dehydrogenase family.

The protein resides in the cytoplasm. It carries out the reaction sn-glycerol 3-phosphate + NAD(+) = dihydroxyacetone phosphate + NADH + H(+). The catalysed reaction is sn-glycerol 3-phosphate + NADP(+) = dihydroxyacetone phosphate + NADPH + H(+). Its pathway is membrane lipid metabolism; glycerophospholipid metabolism. Does not seem to be inhibited by sn-glycerol 3-phosphate, in contrast to the E.coli homolog enzyme which is very sensitive to allosteric inhibition by G3P. Catalyzes the reduction of the glycolytic intermediate dihydroxyacetone phosphate (DHAP) to sn-glycerol 3-phosphate (G3P), the key precursor for phospholipid synthesis. The protein is Glycerol-3-phosphate dehydrogenase [NAD(P)+] of Bacillus subtilis (strain 168).